Here is an 841-residue protein sequence, read N- to C-terminus: Homeobox-leucine zipper protein ATHB-9 (841 aa).

Over residues 1-18 (MMAHHSMDDRDSPDKGFD) the composition is skewed to basic and acidic residues. A disordered region spans residues 1–21 (MMAHHSMDDRDSPDKGFDSGK). A DNA-binding region (homeobox) is located at residues 18-81 (DSGKYVRYTP…NRRCREKQRK (64 aa)). Residues 85-118 (RLQTVNRKLSAMNKLLMEENDRLQKQVSNLVYEN) adopt a coiled-coil conformation. Disordered regions lie at residues 140–162 (VVVSGQQRQQQNPTHQHPQRDVN) and 602–630 (DQKTNPNDHQSASRTRDLASSLDGSTKTD). A compositionally biased stretch (low complexity) spans 145-155 (QQRQQQNPTHQ). The region spanning 160-388 (DVNNPANLLS…IAQETSGEVQ (229 aa)) is the START domain. Over residues 603-614 (QKTNPNDHQSAS) the composition is skewed to polar residues.

Belongs to the HD-ZIP homeobox family. Class III subfamily. Binds DNA as homodimer. Interacts with ESR1 and ESR2. Interacts with ZPR3.

It is found in the nucleus. Functionally, probable transcription factor involved in the determination of adaxial-abaxial polarity in ovule primordium. Specifies adaxial leaf fates. Binds to the DNA sequence 5'-GTAAT[GC]ATTAC-3'. This chain is Homeobox-leucine zipper protein ATHB-9 (ATHB-9), found in Arabidopsis thaliana (Mouse-ear cress).